Here is a 177-residue protein sequence, read N- to C-terminus: Bifunctional protein PyrR (177 aa).

The PRPP-binding motif lies at 97 to 109 (IILVDDVLYTGRT).

This sequence belongs to the purine/pyrimidine phosphoribosyltransferase family. PyrR subfamily.

The enzyme catalyses UMP + diphosphate = 5-phospho-alpha-D-ribose 1-diphosphate + uracil. Functionally, regulates the transcription of the pyrimidine nucleotide (pyr) operon in response to exogenous pyrimidines. In terms of biological role, also displays a weak uracil phosphoribosyltransferase activity which is not physiologically significant. The protein is Bifunctional protein PyrR of Nitrosococcus oceani (strain ATCC 19707 / BCRC 17464 / JCM 30415 / NCIMB 11848 / C-107).